A 616-amino-acid chain; its full sequence is Chaperone protein HscA (616 aa).

This sequence belongs to the heat shock protein 70 family.

Its function is as follows. Chaperone involved in the maturation of iron-sulfur cluster-containing proteins. Has a low intrinsic ATPase activity which is markedly stimulated by HscB. Involved in the maturation of IscU. The protein is Chaperone protein HscA of Enterobacter sp. (strain 638).